The chain runs to 337 residues: Ribosomal RNA small subunit methyltransferase H (337 aa).

Residues 36–38, Asp56, Phe82, Asp100, and Gln107 each bind S-adenosyl-L-methionine; that span reads GGH. The tract at residues 317-337 is disordered; the sequence is RRSGRIPNPQSPIPASQGDAR.

This sequence belongs to the methyltransferase superfamily. RsmH family.

It localises to the cytoplasm. It carries out the reaction cytidine(1402) in 16S rRNA + S-adenosyl-L-methionine = N(4)-methylcytidine(1402) in 16S rRNA + S-adenosyl-L-homocysteine + H(+). In terms of biological role, specifically methylates the N4 position of cytidine in position 1402 (C1402) of 16S rRNA. The sequence is that of Ribosomal RNA small subunit methyltransferase H from Xanthomonas oryzae pv. oryzae (strain KACC10331 / KXO85).